Here is a 544-residue protein sequence, read N- to C-terminus: Probable protein kinase UbiB (544 aa).

One can recognise a Protein kinase domain in the interval 123 to 501 (DFDLVPLASA…KRQQATGKFL (379 aa)). ATP-binding positions include 129–137 (LASASIAQV) and lysine 152. Catalysis depends on aspartate 287, which acts as the Proton acceptor. 2 helical membrane passes run 496-516 (ATGKFLFGVGATLVVCSAILV) and 519-539 (TYEQLSLATAIAGVTFWLFSW).

Belongs to the ABC1 family. UbiB subfamily.

Its subcellular location is the cell inner membrane. The protein operates within cofactor biosynthesis; ubiquinone biosynthesis [regulation]. Its function is as follows. Is probably a protein kinase regulator of UbiI activity which is involved in aerobic coenzyme Q (ubiquinone) biosynthesis. This Vibrio vulnificus (strain CMCP6) protein is Probable protein kinase UbiB.